The chain runs to 1245 residues: Nidogen-1 (1245 aa).

An N-terminal signal peptide occupies residues 1–28 (MLDASGCSWAMWTWALLQLLLLVGPGGC). The region spanning 106–268 (PFLADLDTTD…GVWVFEIGSP (163 aa)) is the NIDO domain. N-linked (GlcNAc...) asparagine glycosylation occurs at asparagine 187. Residues tyrosine 290 and tyrosine 295 each carry the sulfotyrosine modification. The O-linked (GalNAc...) threonine glycan is linked to threonine 299. Positions 307 to 344 (VATPSPSHSPRRGYPDPHNVPRILSPGYEATERPRGVP) are disordered. O-linked (GalNAc...) serine glycosylation occurs at serine 331. Threonine 337 and threonine 345 each carry an O-linked (GalNAc...) threonine glycan. An O-linked (GalNAc...) threonine; partial glycan is attached at threonine 348. The EGF-like 1 domain maps to 384–424 (SQQTCANNRHQCSVHAECRDYATGFCCRCVANYTGNGRQCV). Cystine bridges form between cysteine 388–cysteine 401, cysteine 395–cysteine 410, cysteine 409–cysteine 616, cysteine 412–cysteine 423, cysteine 670–cysteine 683, cysteine 677–cysteine 693, cysteine 695–cysteine 706, cysteine 712–cysteine 725, cysteine 719–cysteine 734, cysteine 736–cysteine 748, cysteine 760–cysteine 775, cysteine 767–cysteine 785, cysteine 787–cysteine 798, cysteine 804–cysteine 815, cysteine 809–cysteine 824, cysteine 826–cysteine 837, cysteine 847–cysteine 876, cysteine 887–cysteine 894, and cysteine 896–cysteine 917. A glycan (N-linked (GlcNAc...) asparagine) is linked at asparagine 415. Residues 428–665 (SPQRVNGKVK…GPVRDGSPDA (238 aa)) form the Nidogen G2 beta-barrel domain. In terms of domain architecture, EGF-like 2 spans 666 to 707 (LQNPCYIGTHGCDSNAACRPGPGTQFTCECSIGFRGDGQTCY). A Cell attachment site motif is present at residues 700–702 (RGD). Residues 708–749 (DIDECSEQPSRCGNHAVCNNLPGTFRCECVEGYHFSDRGTCV) enclose the EGF-like 3; calcium-binding domain. The EGF-like 4 domain maps to 756–799 (PINYCETGLHNCDIPQRAQCIYMGGSSYTCSCLPGFSGDGRACR). The EGF-like 5; calcium-binding domain occupies 800–838 (DVDECQHSRCHPDAFCYNTPGSFTCQCKPGYQGDGFRCM). The Thyroglobulin type-1 domain occupies 844-917 (KTRCQLEREH…RTPPGMRPPC (74 aa)). 2 O-linked (GalNAc...) threonine glycosylation sites follow: threonine 920 and threonine 933. 4 LDL-receptor class B repeats span residues 988-1030 (KVVY…DHLG), 1031-1073 (RTIF…DPVR), 1074-1118 (GNLY…DAFS), and 1119-1160 (SQLC…YGKN). The EGF-like 6 domain occupies 1206–1242 (GHNYCSVNNGGCTHLCLPTPGSRTCRCPDNTLGVDCI). Disulfide bonds link cysteine 1210/cysteine 1221, cysteine 1217/cysteine 1230, and cysteine 1232/cysteine 1241.

In terms of assembly, interacts with FBLN1. Interacts with LGALS3BP. Interacts with PLXDC1. Interacts with SVEP1. N- and O-glycosylated.

It localises to the secreted. The protein resides in the extracellular space. It is found in the extracellular matrix. Its subcellular location is the basement membrane. Sulfated glycoprotein widely distributed in basement membranes and tightly associated with laminin. Also binds to collagen IV and perlecan. It probably has a role in cell-extracellular matrix interactions. This chain is Nidogen-1 (Nid1), found in Mus musculus (Mouse).